A 294-amino-acid chain; its full sequence is MANNIPIGSPVRTKAIINRYFVKAKKNLGQNFLVDQDAILGIVEAADIQPGDQVIEIGPGIGSLTEQLLLAGAKVFAYEVDDSLPEILHNELPKKIGEQSLNDRFKLLLKDVLKADFQNDLAGFFDMKQPIKVVANLPYYITTPIIFALSESDLHFSSLTLMMQKEVAERLEAKPGNKEYGPLTISVQTEMNVKIALEVKSTSFMPRPKVDSSVVVLTPLQERPKIENRKHFIWVVKMCFSQRRKTLNNNLKALIPNAKEREALISKLGVDPRVRPEDLTIDQFIEIARNIPAK.

S-adenosyl-L-methionine-binding residues include asparagine 31, leucine 33, glycine 58, glutamate 79, aspartate 111, and asparagine 136.

It belongs to the class I-like SAM-binding methyltransferase superfamily. rRNA adenine N(6)-methyltransferase family. RsmA subfamily.

Its subcellular location is the cytoplasm. It carries out the reaction adenosine(1518)/adenosine(1519) in 16S rRNA + 4 S-adenosyl-L-methionine = N(6)-dimethyladenosine(1518)/N(6)-dimethyladenosine(1519) in 16S rRNA + 4 S-adenosyl-L-homocysteine + 4 H(+). In terms of biological role, specifically dimethylates two adjacent adenosines (A1518 and A1519) in the loop of a conserved hairpin near the 3'-end of 16S rRNA in the 30S particle. May play a critical role in biogenesis of 30S subunits. This is Ribosomal RNA small subunit methyltransferase A from Lactobacillus acidophilus (strain ATCC 700396 / NCK56 / N2 / NCFM).